A 472-amino-acid chain; its full sequence is Ras-GEF domain-containing family member 1B (472 aa).

Residues 34-164 (HDNNLLSGSL…MIQCLIRKLA (131 aa)) enclose the N-terminal Ras-GEF domain. Residues 204 to 452 (DPYTLAQQLT…YLASYESEGP (249 aa)) form the Ras-GEF domain.

In terms of assembly, interacts with CCDC124 during cytokinesis. Interacts with Ras family proteins.

It localises to the early endosome. The protein localises to the late endosome. Its subcellular location is the midbody. Guanine nucleotide exchange factor (GEF) with specificity for RAP2A, it doesn't seems to activate other Ras family proteins (in vitro). This Bos taurus (Bovine) protein is Ras-GEF domain-containing family member 1B (RASGEF1B).